The following is a 264-amino-acid chain: Tryptophan synthase alpha chain (264 aa).

Active-site proton acceptor residues include Glu49 and Asp60.

Belongs to the TrpA family. Tetramer of two alpha and two beta chains.

It catalyses the reaction (1S,2R)-1-C-(indol-3-yl)glycerol 3-phosphate + L-serine = D-glyceraldehyde 3-phosphate + L-tryptophan + H2O. The protein operates within amino-acid biosynthesis; L-tryptophan biosynthesis; L-tryptophan from chorismate: step 5/5. Functionally, the alpha subunit is responsible for the aldol cleavage of indoleglycerol phosphate to indole and glyceraldehyde 3-phosphate. This Lachnospira eligens (strain ATCC 27750 / DSM 3376 / VPI C15-48 / C15-B4) (Eubacterium eligens) protein is Tryptophan synthase alpha chain.